A 508-amino-acid chain; its full sequence is UDP-N-acetylmuramoyl-L-alanyl-D-glutamate--2,6-diaminopimelate ligase (508 aa).

S29 contacts UDP-N-acetyl-alpha-D-muramoyl-L-alanyl-D-glutamate. Residue 112-118 (GTNGKTS) coordinates ATP. UDP-N-acetyl-alpha-D-muramoyl-L-alanyl-D-glutamate-binding positions include 159 to 160 (TT), S186, Q192, and R194. An N6-carboxylysine modification is found at K226. Residues R398, 421-424 (DNPR), G473, and E477 contribute to the meso-2,6-diaminopimelate site. The short motif at 421–424 (DNPR) is the Meso-diaminopimelate recognition motif element.

The protein belongs to the MurCDEF family. MurE subfamily. Requires Mg(2+) as cofactor. Carboxylation is probably crucial for Mg(2+) binding and, consequently, for the gamma-phosphate positioning of ATP.

It localises to the cytoplasm. The enzyme catalyses UDP-N-acetyl-alpha-D-muramoyl-L-alanyl-D-glutamate + meso-2,6-diaminopimelate + ATP = UDP-N-acetyl-alpha-D-muramoyl-L-alanyl-gamma-D-glutamyl-meso-2,6-diaminopimelate + ADP + phosphate + H(+). Its pathway is cell wall biogenesis; peptidoglycan biosynthesis. In terms of biological role, catalyzes the addition of meso-diaminopimelic acid to the nucleotide precursor UDP-N-acetylmuramoyl-L-alanyl-D-glutamate (UMAG) in the biosynthesis of bacterial cell-wall peptidoglycan. The polypeptide is UDP-N-acetylmuramoyl-L-alanyl-D-glutamate--2,6-diaminopimelate ligase (Janthinobacterium sp. (strain Marseille) (Minibacterium massiliensis)).